The chain runs to 449 residues: Na(+)/H(+) antiporter NhaA (449 aa).

The next 12 helical transmembrane spans lie at 30–50, 69–89, 112–132, 138–158, 168–188, 192–212, 218–238, 241–261, 312–332, 348–368, 386–406, and 419–439; these read IFLI…WAGA, FGLT…FLVA, LLAA…LNLG, GWGI…GLLG, FLIA…ALFY, LSWI…LMNW, LIWY…SGIH, IAGV…SKIL, SLVD…NAGV, LGIL…FTLI, IIGI…ITNL, and ISIL…LLLT.

Belongs to the NhaA Na(+)/H(+) (TC 2.A.33) antiporter family.

It is found in the cell inner membrane. The catalysed reaction is Na(+)(in) + 2 H(+)(out) = Na(+)(out) + 2 H(+)(in). Functionally, na(+)/H(+) antiporter that extrudes sodium in exchange for external protons. In Christiangramia forsetii (strain DSM 17595 / CGMCC 1.15422 / KT0803) (Gramella forsetii), this protein is Na(+)/H(+) antiporter NhaA.